Reading from the N-terminus, the 34-residue chain is MPVNDLGAIATALFVFIPCVFLILLYAQTASRGS.

Residues 6–26 (LGAIATALFVFIPCVFLILLY) traverse the membrane as a helical segment.

The protein belongs to the PsbM family. PSII is composed of 1 copy each of membrane proteins PsbA, PsbB, PsbC, PsbD, PsbE, PsbF, PsbH, PsbI, PsbJ, PsbK, PsbL, PsbM, PsbT, PsbX, PsbY, PsbZ, Psb30/Ycf12, peripheral proteins PsbO, CyanoQ (PsbQ), PsbU, PsbV and a large number of cofactors. It forms dimeric complexes.

It localises to the cellular thylakoid membrane. One of the components of the core complex of photosystem II (PSII). PSII is a light-driven water:plastoquinone oxidoreductase that uses light energy to abstract electrons from H(2)O, generating O(2) and a proton gradient subsequently used for ATP formation. It consists of a core antenna complex that captures photons, and an electron transfer chain that converts photonic excitation into a charge separation. This subunit is found at the monomer-monomer interface. The chain is Photosystem II reaction center protein M from Acaryochloris marina (strain MBIC 11017).